The following is a 125-amino-acid chain: Small ribosomal subunit protein bS6 (125 aa).

The disordered stretch occupies residues 94 to 125 (KAETGASSMMKTVEREEARKASQAEFAASNER). Basic and acidic residues predominate over residues 105 to 115 (TVEREEARKAS).

It belongs to the bacterial ribosomal protein bS6 family.

In terms of biological role, binds together with bS18 to 16S ribosomal RNA. This chain is Small ribosomal subunit protein bS6, found in Acidovorax ebreus (strain TPSY) (Diaphorobacter sp. (strain TPSY)).